The primary structure comprises 266 residues: Chymotrypsin-like elastase family member 1 (266 aa).

Positions 1-16 are cleaved as a signal peptide; that stretch reads MLRFLVFATLVLYGHS. Residues 17–26 constitute a propeptide, activation peptide; the sequence is TQDFPETNAR. Positions 27 to 264 constitute a Peptidase S1 domain; sequence VVGGTEAGRN…YISWINKTIA (238 aa). An intrachain disulfide couples cysteine 56 to cysteine 72. Residue histidine 71 is the Charge relay system of the active site. Residues aspartate 85, asparagine 87, glutamine 90, and glutamate 95 each coordinate Ca(2+). Asparagine 87 carries an N-linked (GlcNAc...) asparagine glycan. The active-site Charge relay system is aspartate 119. 3 cysteine pairs are disulfide-bonded: cysteine 153-cysteine 220, cysteine 184-cysteine 200, and cysteine 210-cysteine 240. The active-site Charge relay system is serine 214. N-linked (GlcNAc...) asparagine glycans are attached at residues asparagine 241 and asparagine 260.

This sequence belongs to the peptidase S1 family. Elastase subfamily. Requires Ca(2+) as cofactor.

The protein resides in the secreted. The enzyme catalyses Hydrolysis of proteins, including elastin. Preferential cleavage: Ala-|-Xaa.. Serine proteases that hydrolyze many proteins in addition to elastin. This chain is Chymotrypsin-like elastase family member 1 (CELA1), found in Macaca fascicularis (Crab-eating macaque).